The primary structure comprises 402 residues: Protein prenyltransferase alpha subunit repeat-containing protein 1 (402 aa).

Alanine 2 is modified (N-acetylalanine). PFTA repeat units follow at residues 87–120, 122–155, 180–213, and 219–252; these read LIDV…LNPI, DLHL…QETS, EMEV…KLDV, and ELSS…SQTV. The segment at 263 to 282 is disordered; sequence LRSEPALVPPKDEEAAVSTE. One copy of the PFTA 5 repeat lies at 295 to 328; the sequence is EVEFSTDLIDSYPGHETLWCHRRHIFYLQHHLNA.

It belongs to the protein prenyltransferase subunit alpha family.

This chain is Protein prenyltransferase alpha subunit repeat-containing protein 1 (PTAR1), found in Homo sapiens (Human).